Here is a 271-residue protein sequence, read N- to C-terminus: Dipeptidyl-peptidase 6 (271 aa).

SH3b domains follow at residues 1–64 (MNAI…LFDD) and 72–140 (QKAQ…HPKI). Residues 148 to 268 (HAFRENVVQT…DLATTITAIG (121 aa)) form the NlpC/P60 domain. Residue cysteine 178 is the Nucleophile of the active site. Histidine 224 (proton acceptor) is an active-site residue. Residue histidine 236 is part of the active site.

It belongs to the peptidase C40 family.

It localises to the cytoplasm. Functionally, involved in cell sporulation. Hydrolyzes gamma-D-Glu-L-(meso)A2pm linkages only in those peptide units that have a free N-terminal L-alanine. In Lysinibacillus sphaericus (Bacillus sphaericus), this protein is Dipeptidyl-peptidase 6.